The primary structure comprises 89 residues: Abortive infection protein (89 aa).

It localises to the cell membrane. In terms of biological role, ABI may interact with a target in the cell membrane, which could be the product of the host's cmrA gene, and cause disruption of the cellular membrane such that lysis of the infected cell and death of the infecting phage would result. The protein is Abortive infection protein (abi) of Escherichia coli.